The chain runs to 65 residues: DNA-directed RNA polymerase subunit Rpo10 (65 aa).

Zn(2+) is bound by residues C7, C10, C44, and C45.

The protein belongs to the archaeal Rpo10/eukaryotic RPB10 RNA polymerase subunit family. Part of the RNA polymerase complex. It depends on Zn(2+) as a cofactor.

The protein localises to the cytoplasm. The enzyme catalyses RNA(n) + a ribonucleoside 5'-triphosphate = RNA(n+1) + diphosphate. Functionally, DNA-dependent RNA polymerase (RNAP) catalyzes the transcription of DNA into RNA using the four ribonucleoside triphosphates as substrates. The sequence is that of DNA-directed RNA polymerase subunit Rpo10 from Pyrobaculum arsenaticum (strain DSM 13514 / JCM 11321 / PZ6).